A 107-amino-acid polypeptide reads, in one-letter code: Large ribosomal subunit protein uL24 (107 aa).

It belongs to the universal ribosomal protein uL24 family. In terms of assembly, part of the 50S ribosomal subunit.

Functionally, one of two assembly initiator proteins, it binds directly to the 5'-end of the 23S rRNA, where it nucleates assembly of the 50S subunit. One of the proteins that surrounds the polypeptide exit tunnel on the outside of the subunit. This is Large ribosomal subunit protein uL24 from Gluconacetobacter diazotrophicus (strain ATCC 49037 / DSM 5601 / CCUG 37298 / CIP 103539 / LMG 7603 / PAl5).